Consider the following 266-residue polypeptide: UPF0354 protein lin1649 (266 aa).

The protein belongs to the UPF0354 family.

This Listeria innocua serovar 6a (strain ATCC BAA-680 / CLIP 11262) protein is UPF0354 protein lin1649.